The primary structure comprises 517 residues: Bifunctional purine biosynthesis protein PurH (517 aa).

One can recognise an MGS-like domain in the interval 1-146; sequence MKRLALLSTS…KNFAHLTVLC (146 aa).

It belongs to the PurH family.

The catalysed reaction is (6R)-10-formyltetrahydrofolate + 5-amino-1-(5-phospho-beta-D-ribosyl)imidazole-4-carboxamide = 5-formamido-1-(5-phospho-D-ribosyl)imidazole-4-carboxamide + (6S)-5,6,7,8-tetrahydrofolate. The enzyme catalyses IMP + H2O = 5-formamido-1-(5-phospho-D-ribosyl)imidazole-4-carboxamide. The protein operates within purine metabolism; IMP biosynthesis via de novo pathway; 5-formamido-1-(5-phospho-D-ribosyl)imidazole-4-carboxamide from 5-amino-1-(5-phospho-D-ribosyl)imidazole-4-carboxamide (10-formyl THF route): step 1/1. It functions in the pathway purine metabolism; IMP biosynthesis via de novo pathway; IMP from 5-formamido-1-(5-phospho-D-ribosyl)imidazole-4-carboxamide: step 1/1. In Trichodesmium erythraeum (strain IMS101), this protein is Bifunctional purine biosynthesis protein PurH.